The sequence spans 356 residues: Phosphotriesterase-related protein (356 aa).

The a divalent metal cation site is built by histidine 23, histidine 25, glutamate 175, histidine 207, histidine 236, and aspartate 304.

The protein belongs to the metallo-dependent hydrolases superfamily. Phosphotriesterase family. It depends on a divalent metal cation as a cofactor.

The sequence is that of Phosphotriesterase-related protein from Aedes aegypti (Yellowfever mosquito).